The following is a 337-amino-acid chain: Pentalenene synthase (337 aa).

The Mg(2+) site is built by Asp-80 and Asp-84. Positions 80 to 84 (DDLFD) match the DDXXD motif motif. Residues Cys-128 and Cys-136 are joined by a disulfide bond. Mg(2+) is bound by residues Asn-219, Ser-223, and Glu-227.

It belongs to the terpene synthase family. As to quaternary structure, monomer. The cofactor is Mg(2+).

It carries out the reaction (2E,6E)-farnesyl diphosphate = pentalenene + diphosphate. It participates in sesquiterpene biosynthesis; pentalenene biosynthesis; pentalenene from farnesyl diphosphate: step 1/1. It functions in the pathway antibiotic biosynthesis; pentalenolactone biosynthesis. In terms of biological role, catalyzes the cyclization of farnesyl diphosphate (FPP) to the tricyclic sesquiterpene pentalenene, which is the hydrocarbon precursor of the pentalenolactone family of antibiotics produced by a variety of Streptomyces species. In Streptomyces exfoliatus (Streptomyces hydrogenans), this protein is Pentalenene synthase (penA).